We begin with the raw amino-acid sequence, 252 residues long: Thiazole synthase (252 aa).

Residue Lys91 is the Schiff-base intermediate with DXP of the active site. 1-deoxy-D-xylulose 5-phosphate-binding positions include Gly152, 179 to 180 (AG), and 201 to 202 (NT).

It belongs to the ThiG family. In terms of assembly, homotetramer. Forms heterodimers with either ThiH or ThiS.

The protein localises to the cytoplasm. The catalysed reaction is [ThiS sulfur-carrier protein]-C-terminal-Gly-aminoethanethioate + 2-iminoacetate + 1-deoxy-D-xylulose 5-phosphate = [ThiS sulfur-carrier protein]-C-terminal Gly-Gly + 2-[(2R,5Z)-2-carboxy-4-methylthiazol-5(2H)-ylidene]ethyl phosphate + 2 H2O + H(+). The protein operates within cofactor biosynthesis; thiamine diphosphate biosynthesis. Its function is as follows. Catalyzes the rearrangement of 1-deoxy-D-xylulose 5-phosphate (DXP) to produce the thiazole phosphate moiety of thiamine. Sulfur is provided by the thiocarboxylate moiety of the carrier protein ThiS. In vitro, sulfur can be provided by H(2)S. This Gluconobacter oxydans (strain 621H) (Gluconobacter suboxydans) protein is Thiazole synthase.